Consider the following 351-residue polypeptide: MITLAVDAMGGDQGLAVTVPGATAFLQAHPDVHLIMTGDETQLRQALTAAGAPMERIDICHTAQIVGMDEAPQSALKNKKDSSMRVAVNQVKEGKAQAAVSAGNTGALMATARFVLKTIPGIERPAIAKFLPSDTDHVTLALDLGANVDCTPEQLAQFAVIGSELVHALHPQKGQPRVGLVNVGTEDIKGTDTVKQTYKLLQNSKLNFIGNIESNSILYGEADVVVADGFVGNVMLKTIEGAVKFMSGAIRREFQSNLFNKLAAVAALPALKGLKNKLDPRKFNGAILLGLRGIVIKSHGGTDETGFRYALEEAYHEAKSASLSKIEQGVAEQLAALETAKAVQNENVGGL.

Belongs to the PlsX family. As to quaternary structure, homodimer. Probably interacts with PlsY.

The protein resides in the cytoplasm. The catalysed reaction is a fatty acyl-[ACP] + phosphate = an acyl phosphate + holo-[ACP]. It functions in the pathway lipid metabolism; phospholipid metabolism. Catalyzes the reversible formation of acyl-phosphate (acyl-PO(4)) from acyl-[acyl-carrier-protein] (acyl-ACP). This enzyme utilizes acyl-ACP as fatty acyl donor, but not acyl-CoA. This chain is Phosphate acyltransferase, found in Neisseria meningitidis serogroup A / serotype 4A (strain DSM 15465 / Z2491).